The chain runs to 498 residues: ATP synthase subunit beta, chloroplastic (498 aa).

Threonine 6 bears the Phosphothreonine mark. The residue at position 13 (serine 13) is a Phosphoserine. 172 to 179 (GGAGVGKT) serves as a coordination point for ATP.

Belongs to the ATPase alpha/beta chains family. In terms of assembly, F-type ATPases have 2 components, CF(1) - the catalytic core - and CF(0) - the membrane proton channel. CF(1) has five subunits: alpha(3), beta(3), gamma(1), delta(1), epsilon(1). CF(0) has four main subunits: a(1), b(1), b'(1) and c(9-12).

The protein resides in the plastid. The protein localises to the chloroplast thylakoid membrane. It catalyses the reaction ATP + H2O + 4 H(+)(in) = ADP + phosphate + 5 H(+)(out). Produces ATP from ADP in the presence of a proton gradient across the membrane. The catalytic sites are hosted primarily by the beta subunits. The chain is ATP synthase subunit beta, chloroplastic from Capsella bursa-pastoris (Shepherd's purse).